We begin with the raw amino-acid sequence, 543 residues long: Ribonuclease Y (543 aa).

Residues 4–24 traverse the membrane as a helical segment; it reads IIMIPVATAIVSLLVGTVIGY. Residues 233 to 296 enclose the KH domain; sequence TVSVVDLPNE…EIAKRAMERL (64 aa). The HD domain maps to 359-452; that stretch reads VLSHSIEVGK…VVAADTISSA (94 aa).

The protein belongs to the RNase Y family.

Its subcellular location is the cell membrane. In terms of biological role, endoribonuclease that initiates mRNA decay. The sequence is that of Ribonuclease Y from Lactobacillus helveticus (strain DPC 4571).